We begin with the raw amino-acid sequence, 295 residues long: Protease HtpX (295 aa).

2 helical membrane passes run 4–24 (ILLFVATNLAVVLVASITLSL) and 41–61 (SSLLVFCAVFGFAGSLVSLFI). A Zn(2+)-binding site is contributed by histidine 147. Residue glutamate 148 is part of the active site. Histidine 151 is a Zn(2+) binding site. The next 2 membrane-spanning stretches (helical) occupy residues 158 to 178 (VTLALVQGVVNTFVMFFARII) and 199 to 219 (VATIVAELILGILASMIVMWF). Glutamate 224 contacts Zn(2+).

The protein belongs to the peptidase M48B family. The cofactor is Zn(2+).

It is found in the cell inner membrane. The polypeptide is Protease HtpX (Pseudomonas putida (strain GB-1)).